The chain runs to 685 residues: Amino acid transporter heavy chain SLC3A1 (685 aa).

The segment covering 1–11 (MAEDKSKRDSI) has biased composition (basic and acidic residues). The segment at 1–56 (MAEDKSKRDSIEMSMKGCQTNNGFVHNEDILEQTPDPGSSTDNLKHSTRGILGSQE) is disordered. Residues 1-87 (MAEDKSKRDS…GQARYRIPRE (87 aa)) lie on the Cytoplasmic side of the membrane. At S10 the chain carries Phosphoserine. A helical; Signal-anchor for type II membrane protein transmembrane segment spans residues 88-108 (ILFWLTVASVLVLIAATIAII). The Extracellular segment spans residues 109–685 (ALSPKCLDWW…SVLNILYTSC (577 aa)). Residue N214 participates in Ca(2+) binding. N-linked (GlcNAc...) asparagine glycosylation is found at N214 and N261. Cysteines 242 and 273 form a disulfide. Ca(2+)-binding residues include D284, F318, L319, and E321. N-linked (GlcNAc...) asparagine glycosylation is found at N332, N495, N513, and N575. Disulfide bonds link C571–C666 and C673–C685.

Disulfide-linked heterodimer composed of the catalytic light subunit SLC7A9 and the heavy subunit SLC3A1. The heterodimer is the minimal functional unit. Assembles in non-covalently linked heterotetramers (dimers of heterodimers) and higher order oligomers; the oligomerization is mediated by SLC3A1 likely to prevent degradation in the endoplasmic reticulum and facilitate heteromer trafficking to the plasma membrane. Disulfide-linked heterodimer composed of the catalytic light subunit SLC7A13 and the heavy subunit SLC3A1. Expressed in the brush border membrane in the kidney (at protein level). Predominantly expressed in the kidney, small intestine and pancreas. Weakly expressed in liver.

The protein localises to the cell membrane. The protein resides in the apical cell membrane. Functionally, acts as a chaperone that facilitates biogenesis and trafficking of functional transporter heteromers to the plasma membrane. Associates with SLC7A9 to form a functional transporter complex that mediates the electrogenic exchange between cationic amino acids and neutral amino acids, with a stoichiometry of 1:1. SLC7A9-SLC3A1 transporter has system b(0,+)-like activity with high affinity for extracellular cationic amino acids and L-cystine and lower affinity for intracellular neutral amino acids. Substrate exchange is driven by high concentration of intracellular neutral amino acids and the intracellular reduction of L-cystine to L-cysteine. SLC7A9-SLC3A1 acts as a major transporter for reabsorption of L-cystine and dibasic amino acids across the brush border membrane in early proximal tubules. Associates with SLC7A13 to form a functional complex that transports anionic and neutral amino acids via exchange or facilitated diffusion. SLC7A13-SLC3A1 may act as a major transporter for L-cystine in late proximal tubules, ensuring its reabsorption from the luminal fluid in exchange for cytosolic L-glutamate or L-aspartate. In Homo sapiens (Human), this protein is Amino acid transporter heavy chain SLC3A1.